The primary structure comprises 167 residues: Small ribosomal subunit protein uS5 (167 aa).

One can recognise an S5 DRBM domain in the interval 11 to 74 (LQEKLIAVNR…EKARRNMINV (64 aa)).

It belongs to the universal ribosomal protein uS5 family. Part of the 30S ribosomal subunit. Contacts proteins S4 and S8.

Its function is as follows. With S4 and S12 plays an important role in translational accuracy. Functionally, located at the back of the 30S subunit body where it stabilizes the conformation of the head with respect to the body. The protein is Small ribosomal subunit protein uS5 of Shigella dysenteriae serotype 1 (strain Sd197).